Consider the following 183-residue polypeptide: MHASASQDKNRRKPGHDEGAHNPDYENITLAFRNKDQLKLSQSTPTKQAKFKTSLDPAESPPWLYRTIMMLYVLLALVFLSCIVLSALVLVKNSEMSKELWTLKAELSNVSDTVWNIRELQNQQTRIWEAAQGDIKEVKKTLGTVMSSIQTGNDRLKTVPADITQIKKTLEALEKKAQPQPST.

A disordered region spans residues 1–26; that stretch reads MHASASQDKNRRKPGHDEGAHNPDYE. Residues 1–70 are Cytoplasmic-facing; the sequence is MHASASQDKN…PPWLYRTIMM (70 aa). A compositionally biased stretch (basic and acidic residues) spans 15–24; it reads GHDEGAHNPD. The chain crosses the membrane as a helical; Signal-anchor for type II membrane protein span at residues 71–91; sequence LYVLLALVFLSCIVLSALVLV. At 92-183 the chain is on the extracellular side; that stretch reads KNSEMSKELW…EKKAQPQPST (92 aa). Asn-109 carries an N-linked (GlcNAc...) asparagine glycan.

It localises to the membrane. The polypeptide is Mast cell-expressed membrane protein 1 (Mus musculus (Mouse)).